The following is a 94-amino-acid chain: Enhancer of yellow 2 transcription factor (94 aa).

It belongs to the ENY2 family. In terms of assembly, component of the nuclear pore complex (NPC)-associated AMEX complex (anchoring and mRNA export complex), composed of at least e(y)2 and xmas-2. Component of the SAGA transcription coactivator-HAT complexes, at least composed of Ada2b, e(y)2, Pcaf/Gcn5, Taf10 and Nipped-A/Trrap. Within the SAGA complex, e(y)2, Sgf11, and not/nonstop form an additional subcomplex of SAGA called the DUB module (deubiquitination module). Component of the THO complex, composed of at least e(y)2, HPR1, THO2, THOC5, THOC6 and THOC7. Interacts with e(y)1. Interacts with su(Hw) (via zinc fingers). Interacts with xmas-2; required for localization to the nuclear periphery. Interacts with the nuclear pore complex (NPC).

The protein localises to the nucleus. It is found in the nucleoplasm. It localises to the cytoplasm. Involved in mRNA export coupled transcription activation by association with both the AMEX and the SAGA complexes. The SAGA complex is a multiprotein complex that activates transcription by remodeling chromatin and mediating histone acetylation and deubiquitination. Within the SAGA complex, participates in a subcomplex that specifically deubiquitinates histone H2B. The SAGA complex is recruited to specific gene promoters by activators, where it is required for transcription. Required for nuclear receptor-mediated transactivation. Involved in transcription elongation by recruiting the THO complex onto nascent mRNA. The AMEX complex functions in docking export-competent ribonucleoprotein particles (mRNPs) to the nuclear entrance of the nuclear pore complex (nuclear basket). AMEX participates in mRNA export and accurate chromatin positioning in the nucleus by tethering genes to the nuclear periphery. This is Enhancer of yellow 2 transcription factor from Drosophila mojavensis (Fruit fly).